A 91-amino-acid polypeptide reads, in one-letter code: Acylphosphatase (91 aa).

Positions 6-91 (CMRCYISGRV…WEDYISFDVL (86 aa)) constitute an Acylphosphatase-like domain. Catalysis depends on residues Arg21 and Asn39.

It belongs to the acylphosphatase family.

The catalysed reaction is an acyl phosphate + H2O = a carboxylate + phosphate + H(+). The protein is Acylphosphatase (acyP) of Legionella pneumophila subsp. pneumophila (strain Philadelphia 1 / ATCC 33152 / DSM 7513).